Reading from the N-terminus, the 562-residue chain is Protein FAM83D-B (562 aa).

The tract at residues 424 to 472 (ITTQTTETSQCTTQTPAPTSSVARLSNSSNSSSSSFSSASTTSTGSNCS) is disordered. A compositionally biased stretch (low complexity) spans 425 to 472 (TTQTTETSQCTTQTPAPTSSVARLSNSSNSSSSSFSSASTTSTGSNCS).

Belongs to the FAM83 family.

It localises to the cytoplasm. It is found in the cytoskeleton. Its subcellular location is the spindle. The protein resides in the spindle pole. In terms of biological role, may regulate cell proliferation, growth, migration and epithelial to mesenchymal transition. May also be important for proper chromosome congression and alignment during mitosis. The sequence is that of Protein FAM83D-B from Xenopus laevis (African clawed frog).